Here is a 283-residue protein sequence, read N- to C-terminus: Light-independent protochlorophyllide reductase iron-sulfur ATP-binding protein (283 aa).

ATP-binding positions include 15 to 20 (GIGKST) and Lys-44. Ser-19 provides a ligand contact to Mg(2+). The [4Fe-4S] cluster site is built by Cys-100 and Cys-134. Residue 185-186 (NR) participates in ATP binding.

The protein belongs to the NifH/BchL/ChlL family. Homodimer. Protochlorophyllide reductase is composed of three subunits; ChlL, ChlN and ChlB. The cofactor is [4Fe-4S] cluster.

The catalysed reaction is chlorophyllide a + oxidized 2[4Fe-4S]-[ferredoxin] + 2 ADP + 2 phosphate = protochlorophyllide a + reduced 2[4Fe-4S]-[ferredoxin] + 2 ATP + 2 H2O. The protein operates within porphyrin-containing compound metabolism; chlorophyll biosynthesis (light-independent). In terms of biological role, component of the dark-operative protochlorophyllide reductase (DPOR) that uses Mg-ATP and reduced ferredoxin to reduce ring D of protochlorophyllide (Pchlide) to form chlorophyllide a (Chlide). This reaction is light-independent. The L component serves as a unique electron donor to the NB-component of the complex, and binds Mg-ATP. The chain is Light-independent protochlorophyllide reductase iron-sulfur ATP-binding protein from Synechococcus sp. (strain JA-2-3B'a(2-13)) (Cyanobacteria bacterium Yellowstone B-Prime).